The following is a 678-amino-acid chain: MAAHHRQNTAGRRKVQVSYVIRDEVEKYNRNGVNALQLDPALNRLFTAGRDSIIRIWNVNQHKQDPYIASMEHHTDWVNDIVLCCNGKTLISASSDTTVKVWNAHKGFCMSTLRTHKDYVKALAYAKDKELVASAGLDRQIFLWDVNTLTALTASNNTVTTSSLSGNKDSIYSLAMNQMGTVIVSGSTEKVLRVWDPRTCQKLMKLKGHTDNVKALLLNRDGTQCLSGSSDGTIRLWSLGQQRCIATYRVHDEGVWALQVNEGFTHVYSGGRDRKIYCTDLRNPDIRLLICEEKAPVLKMELDRSADPPLALWVATTKSSVNKWPIKGILNFRSSGDYENDCSTPLSPICSQPDQVIKGGASIIQCNILNDKRHILTKDTNNNVAYWDVLKACKVEDLGKVDFEEEIKKRFKMVYVPNWFSVDLKTGMLTITLDESDCFAAWVSAKDAGFSSPDGSDPKLNLGGLLLQALLEFWPRTHINPMEEEENEVNHVANGEQENRIQKGNGYFQVPPHTPVIFGEAGGRTLFRLLCRDSGGETESMLLNETVPQWVIDITVDKNMPKFNKIPFYLQPHSSSGAKTLKKDRLSASDMLQVRKVMEHVYEKIINVDTESQTTSSSNNEKPGEQEKEEDIAVLAEEKIELLCQDQILDPNMDLRTVKHFIWKSGGDLTLHYRQKST.

WD repeat units follow at residues Y28 to Y67, H73 to T112, T115 to A154, G166 to K205, G208 to T247, V250 to L289, E292 to S334, and K358 to D397. The segment at V608–E629 is disordered. Low complexity predominate over residues T610–E621.

This sequence belongs to the WD repeat WDR48 family.

The protein resides in the nucleus. It localises to the cytoplasm. Its subcellular location is the lysosome. The protein localises to the late endosome. Its function is as follows. Regulator of deubiquitinating complexes, which acts as a strong activator of usp1, usp12 and usp46. Enhances the usp1-mediated deubiquitination of fancd2; usp1 being almost inactive by itself. Activates deubiquitination by increasing the catalytic turnover without increasing the affinity of deubiquitinating enzymes for the substrate. Also activates deubiquitinating activity of complexes containing usp12. Together with rad51ap1, promotes DNA repair by stimulating rad51-mediated homologous recombination. Binds single-stranded DNA (ssDNA) and double-stranded DNA (dsDNA). DNA-binding is required both for usp1-mediated deubiquitination of fancd2 and stimulation of rad51-mediated homologous recombination: both wdr48/uaf1 and rad51ap1 have coordinated role in DNA-binding during these processes. Together with atad5 and by regulating usp1 activity, has a role in pcna-mediated translesion synthesis (TLS) by deubiquitinating monoubiquitinated pcna. Together with atad5, has a role in recruiting rad51 to stalled forks during replication stress. The polypeptide is WD repeat-containing protein 48 (wdr48) (Xenopus tropicalis (Western clawed frog)).